Reading from the N-terminus, the 408-residue chain is Peptidase T (408 aa).

Residue His-78 coordinates Zn(2+). The active site involves Asp-80. Asp-140 provides a ligand contact to Zn(2+). Glu-173 serves as the catalytic Proton acceptor. The Zn(2+) site is built by Glu-174, Asp-196, and His-379.

Belongs to the peptidase M20B family. The cofactor is Zn(2+).

The protein resides in the cytoplasm. It catalyses the reaction Release of the N-terminal residue from a tripeptide.. In terms of biological role, cleaves the N-terminal amino acid of tripeptides. The chain is Peptidase T from Shigella flexneri serotype 5b (strain 8401).